A 169-amino-acid polypeptide reads, in one-letter code: Small ribosomal subunit protein uS5 (169 aa).

In terms of domain architecture, S5 DRBM spans 15 to 79 (LKEQVVAINR…EAAKKNLRRI (65 aa)).

The protein belongs to the universal ribosomal protein uS5 family. In terms of assembly, part of the 30S ribosomal subunit. Contacts proteins S4 and S8.

With S4 and S12 plays an important role in translational accuracy. Functionally, located at the back of the 30S subunit body where it stabilizes the conformation of the head with respect to the body. The sequence is that of Small ribosomal subunit protein uS5 from Solibacter usitatus (strain Ellin6076).